Here is a 181-residue protein sequence, read N- to C-terminus: Protein TrbB (181 aa).

An N-terminal signal peptide occupies residues 1–22 (MSLTKSLLFTLLLSAAAVQAST). A Thioredoxin domain is found at 37–172 (TQPAQPAAGT…FMARVDTVLQ (136 aa)).

The protein resides in the periplasm. This chain is Protein TrbB (trbB), found in Escherichia coli (strain K12).